We begin with the raw amino-acid sequence, 93 residues long: Small ribosomal subunit protein uS19 (93 aa).

The protein belongs to the universal ribosomal protein uS19 family.

Its function is as follows. Protein S19 forms a complex with S13 that binds strongly to the 16S ribosomal RNA. This is Small ribosomal subunit protein uS19 from Lawsonia intracellularis (strain PHE/MN1-00).